The following is a 569-amino-acid chain: Phosphatase and actin regulator 2 (569 aa).

Residues 1–13 (MGQTSVSALSPQP) show a composition bias toward polar residues. Residues 1–47 (MGQTSVSALSPQPGSVDGLDKASIANSDGPPAGSQTPPFKRKGKLST) form a disordered region. S27 is subject to Phosphoserine. T36 carries the phosphothreonine modification. One copy of the RPEL 1 repeat lies at 71-96 (AVLERKISTRQSREELIRRGLLKELP). 2 disordered regions span residues 98–253 (QDGD…TGKP) and 295–483 (PTLP…QEAK). Over residues 140–151 (GPPREEQAEEKT) the composition is skewed to basic and acidic residues. Positions 162-176 (GSKASSSPSASSTSS) are enriched in low complexity. Positions 212–224 (LSPNTVTSETSSL) are enriched in polar residues. S357 carries the post-translational modification Phosphoserine. Residues 386-399 (TDDDDEEDDDDDST) show a composition bias toward acidic residues. 3 RPEL repeats span residues 412-437 (DTLA…QRTS), 450-475 (TKLV…KQKN), and 488-513 (RRLS…RFNE). Over residues 423-444 (SKKELEDKNILQRTSEEERQEL) the composition is skewed to basic and acidic residues. S457 is subject to Phosphoserine. Over residues 461–483 (TTEELEQRSILKQKNEEEEQEAK) the composition is skewed to basic and acidic residues. Position 495 is a phosphoserine (S495).

This sequence belongs to the phosphatase and actin regulator family. In terms of assembly, binds PPP1CA and actin. Expressed in the brain with high levels in the cerebellum, specifically in the Purkinje cell layer, choroid plexus and thalamus (ventral, rhomboid and anterior nuclei). Moderate to high expression in the hippocampus, piriform cortex, olfactory bulb, entorhinal cortex, as well as in geniculate bodies, lamboid septal zone, preoptic area and ventral pallidum (at protein level).

The chain is Phosphatase and actin regulator 2 (Phactr2) from Rattus norvegicus (Rat).